The primary structure comprises 272 residues: Cerberus (272 aa).

The signal sequence occupies residues 1-19; the sequence is MSLLLLQLLVLSCLGDTEP. Intrachain disulfides connect Cys168–Cys215, Cys182–Cys229, Cys192–Cys245, and Cys196–Cys247. The region spanning 168-253 is the CTCK domain; sequence CRTLPFSQSV…ECNCETQKIE (86 aa). N-linked (GlcNAc...) asparagine glycosylation is present at Asn228.

It belongs to the DAN family.

The protein localises to the secreted. In terms of biological role, cytokine that acts as a regulator of the activity of Nodal/BMP pathways during the establishment of bilateral asymmetry in the head and trunk of the embryo. This is Cerberus (CER1) from Gallus gallus (Chicken).